We begin with the raw amino-acid sequence, 113 residues long: Hydrogenase maturation factor HypA (113 aa).

Histidine 2 contacts Ni(2+). Residues cysteine 73, cysteine 76, cysteine 89, and cysteine 92 each contribute to the Zn(2+) site.

This sequence belongs to the HypA/HybF family.

Its function is as follows. Involved in the maturation of [NiFe] hydrogenases. Required for nickel insertion into the metal center of the hydrogenase. This Rhizobium leguminosarum bv. viciae protein is Hydrogenase maturation factor HypA.